A 378-amino-acid polypeptide reads, in one-letter code: Actin-related protein 2/3 complex subunit 1B (378 aa).

WD repeat units follow at residues 8-47, 53-92, 97-138, 143-182, 203-242, 257-295, and 331-375; these read RFAESITCHAWSPDLSMVALCPNNTEVHIYKSLSQDHWER, KHDQIVSGIDWSSKSNKIVTVSHDRNSYVWSLEGAEWVPT, RLNR…WVSK, RHESSVTSVAWHPNNVLLATTSTDGKCRVFSTFIKGVDTK, LSYSWAFGVKWSPSGNTLAYVGHSSMIYFVDDVGPSPLAQ, ISEKMVIGVGYDSNPMVFAADDTGIWSFIRYIGEKKAAS, and VHDN…QELG. Positions 319-340 are disordered; sequence TTANDASDSRGGVHDNSITSIV.

This sequence belongs to the WD repeat ARPC1 family. In terms of assembly, component of the Arp2/3 complex composed of ARP2, ARP3, ARPC1/p41-ARC, ARPC2/p34-ARC, ARPC3/p21-ARC, ARPC4/p20-ARC and ARPC5/p16-ARC. In terms of tissue distribution, expressed at low levels in all tissues with a relatively highest expression in inflorescences.

Its subcellular location is the cytoplasm. The protein localises to the cytoskeleton. Its function is as follows. Functions as a component of the Arp2/3 complex which is involved in regulation of actin polymerization and together with an activating nucleation-promoting factor (NPF) mediates the formation of branched actin networks. Arp2/3 complex plays a critical role in the control of cell morphogenesis via the modulation of cell polarity development. The chain is Actin-related protein 2/3 complex subunit 1B (ARPC1B) from Arabidopsis thaliana (Mouse-ear cress).